Here is a 478-residue protein sequence, read N- to C-terminus: tRNA modification GTPase MnmE (478 aa).

Residues Arg36, Glu94, and Lys133 each contribute to the (6S)-5-formyl-5,6,7,8-tetrahydrofolate site. One can recognise a TrmE-type G domain in the interval 230 to 402 (GIHVVLAGRP…LVETLCAKVG (173 aa)). Asn240 lines the K(+) pocket. Residues 240 to 245 (NAGKSS), 259 to 265 (TDVAGTT), and 284 to 287 (DTAG) contribute to the GTP site. A Mg(2+)-binding site is contributed by Ser244. 3 residues coordinate K(+): Thr259, Val261, and Thr264. Mg(2+) is bound at residue Thr265. Lys478 is a (6S)-5-formyl-5,6,7,8-tetrahydrofolate binding site.

It belongs to the TRAFAC class TrmE-Era-EngA-EngB-Septin-like GTPase superfamily. TrmE GTPase family. Homodimer. Heterotetramer of two MnmE and two MnmG subunits. K(+) serves as cofactor.

Its subcellular location is the cytoplasm. In terms of biological role, exhibits a very high intrinsic GTPase hydrolysis rate. Involved in the addition of a carboxymethylaminomethyl (cmnm) group at the wobble position (U34) of certain tRNAs, forming tRNA-cmnm(5)s(2)U34. The chain is tRNA modification GTPase MnmE from Psychrobacter arcticus (strain DSM 17307 / VKM B-2377 / 273-4).